Here is a 145-residue protein sequence, read N- to C-terminus: Flagellar assembly factor FliW (145 aa).

This sequence belongs to the FliW family. In terms of assembly, interacts with translational regulator CsrA and flagellin(s).

It localises to the cytoplasm. In terms of biological role, acts as an anti-CsrA protein, binds CsrA and prevents it from repressing translation of its target genes, one of which is flagellin. Binds to flagellin and participates in the assembly of the flagellum. This chain is Flagellar assembly factor FliW, found in Exiguobacterium sp. (strain ATCC BAA-1283 / AT1b).